The following is a 424-amino-acid chain: Imidazolonepropionase (424 aa).

Fe(3+) is bound by residues histidine 84 and histidine 86. The Zn(2+) site is built by histidine 84 and histidine 86. Residues arginine 93, tyrosine 156, and histidine 189 each contribute to the 4-imidazolone-5-propanoate site. Residue tyrosine 156 coordinates N-formimidoyl-L-glutamate. A Fe(3+)-binding site is contributed by histidine 254. Histidine 254 provides a ligand contact to Zn(2+). A 4-imidazolone-5-propanoate-binding site is contributed by glutamate 257. Aspartate 328 provides a ligand contact to Fe(3+). Position 328 (aspartate 328) interacts with Zn(2+). Residues asparagine 330 and glycine 332 each contribute to the N-formimidoyl-L-glutamate site. Serine 333 is a 4-imidazolone-5-propanoate binding site.

It belongs to the metallo-dependent hydrolases superfamily. HutI family. Requires Zn(2+) as cofactor. Fe(3+) serves as cofactor.

It localises to the cytoplasm. The catalysed reaction is 4-imidazolone-5-propanoate + H2O = N-formimidoyl-L-glutamate. Its pathway is amino-acid degradation; L-histidine degradation into L-glutamate; N-formimidoyl-L-glutamate from L-histidine: step 3/3. Its function is as follows. Catalyzes the hydrolytic cleavage of the carbon-nitrogen bond in imidazolone-5-propanoate to yield N-formimidoyl-L-glutamate. It is the third step in the universal histidine degradation pathway. This chain is Imidazolonepropionase, found in Geobacillus thermodenitrificans (strain NG80-2).